Consider the following 1590-residue polypeptide: von Willebrand factor D and EGF domain-containing protein (1590 aa).

An N-terminal signal peptide occupies residues 1–20 (MPGGACVLVIALMFLAWGEA). N367 carries an N-linked (GlcNAc...) asparagine glycan. The region spanning 423–606 (AYCYTFTDPH…EWRILPGKSM (184 aa)) is the VWFD domain. Intrachain disulfides connect C425–C565 and C468–C477. N703 and N968 each carry an N-linked (GlcNAc...) asparagine glycan. Positions 1177 to 1216 (TVKSCDCLNGGSCVSDRNFSPGSGVYLCVCLPGFHGSLCE) constitute an EGF-like 1 domain. 3 disulfide bridges follow: C1181–C1189, C1183–C1204, and C1206–C1215. Basic and acidic residues predominate over residues 1268-1280 (DKSVNKEEDDKNA). Residues 1268–1288 (DKSVNKEEDDKNAQGRKRHVK) are disordered. EGF-like domains lie at 1294-1326 (AFTI…SNCQ), 1358-1390 (DEEH…PRCE), 1422-1454 (STAL…EHCQ), 1455-1486 (NAFC…RRFQ), 1518-1550 (NTPI…VRCQ), and 1551-1582 (IPIC…VKCE). 17 disulfide bridges follow: C1298–C1308, C1302–C1314, C1316–C1325, C1362–C1372, C1366–C1378, C1380–C1389, C1426–C1436, C1430–C1442, C1444–C1453, C1458–C1468, C1462–C1474, C1522–C1532, C1526–C1538, C1540–C1549, C1554–C1564, C1558–C1570, and C1572–C1581.

It is found in the secreted. In Homo sapiens (Human), this protein is von Willebrand factor D and EGF domain-containing protein (VWDE).